A 156-amino-acid chain; its full sequence is MEKIPMTPKGLEAMNGELKQLKSVERPAIIKAIAEAREHGDLSENAEYHSAKEKQSFIEGRIKELEGSISLAQVIDPATLSGAIKFGATVDLVDEETEEEKTYMIVGEAEADIEKGLLNIKSPLARALIGKEEGDSVEVRTPGGAKGFEIVKISYV.

The stretch at 45-66 (NAEYHSAKEKQSFIEGRIKELE) forms a coiled coil.

Belongs to the GreA/GreB family.

Its function is as follows. Necessary for efficient RNA polymerase transcription elongation past template-encoded arresting sites. The arresting sites in DNA have the property of trapping a certain fraction of elongating RNA polymerases that pass through, resulting in locked ternary complexes. Cleavage of the nascent transcript by cleavage factors such as GreA or GreB allows the resumption of elongation from the new 3'terminus. GreA releases sequences of 2 to 3 nucleotides. This chain is Transcription elongation factor GreA, found in Jannaschia sp. (strain CCS1).